Consider the following 169-residue polypeptide: GTP-dependent dephospho-CoA kinase (169 aa).

GTP-binding residues include aspartate 45, aspartate 64, and glutamate 121.

Belongs to the GTP-dependent DPCK family.

The catalysed reaction is 3'-dephospho-CoA + GTP = GDP + CoA + H(+). It functions in the pathway cofactor biosynthesis; coenzyme A biosynthesis. Its function is as follows. Catalyzes the GTP-dependent phosphorylation of the 3'-hydroxyl group of dephosphocoenzyme A to form coenzyme A (CoA). The chain is GTP-dependent dephospho-CoA kinase from Methanobrevibacter smithii (strain ATCC 35061 / DSM 861 / OCM 144 / PS).